A 75-amino-acid polypeptide reads, in one-letter code: Small ribosomal subunit protein bS18 (75 aa).

This sequence belongs to the bacterial ribosomal protein bS18 family. Part of the 30S ribosomal subunit. Forms a tight heterodimer with protein bS6.

Its function is as follows. Binds as a heterodimer with protein bS6 to the central domain of the 16S rRNA, where it helps stabilize the platform of the 30S subunit. In Pectobacterium atrosepticum (strain SCRI 1043 / ATCC BAA-672) (Erwinia carotovora subsp. atroseptica), this protein is Small ribosomal subunit protein bS18.